The chain runs to 214 residues: Adenylate kinase (214 aa).

An ATP-binding site is contributed by 15–20; it reads GAGKGT. Residues 35 to 64 form an NMP region; sequence ASGDLFREAIKNQSVIGRKIAAIISQGGYV. AMP is bound by residues serine 36, arginine 41, 62–64, 90–93, and glutamine 97; these read GYV and GYPR. The tract at residues 127-164 is LID; it reads NRVICNNCNSVYNLLFQKPLVENSCDQCSAKLVKRSDD. Arginine 128 contributes to the ATP binding site. Residues cysteine 131 and cysteine 134 each contribute to the Zn(2+) site. 137–138 provides a ligand contact to ATP; sequence VY. Zn(2+) is bound by residues cysteine 151 and cysteine 154. AMP is bound by residues arginine 161 and arginine 172. Leucine 200 contributes to the ATP binding site.

This sequence belongs to the adenylate kinase family. Monomer.

The protein resides in the cytoplasm. The enzyme catalyses AMP + ATP = 2 ADP. Its pathway is purine metabolism; AMP biosynthesis via salvage pathway; AMP from ADP: step 1/1. Functionally, catalyzes the reversible transfer of the terminal phosphate group between ATP and AMP. Plays an important role in cellular energy homeostasis and in adenine nucleotide metabolism. This chain is Adenylate kinase, found in Mycoplasma genitalium (strain ATCC 33530 / DSM 19775 / NCTC 10195 / G37) (Mycoplasmoides genitalium).